Consider the following 378-residue polypeptide: Erythronate-4-phosphate dehydrogenase (378 aa).

Residues Ser-45 and Thr-66 each coordinate substrate. The NAD(+) site is built by Asp-146 and Thr-175. Arg-208 is an active-site residue. Position 232 (Asp-232) interacts with NAD(+). Glu-237 is a catalytic residue. Catalysis depends on His-254, which acts as the Proton donor. Gly-257 contributes to the NAD(+) binding site. Position 258 (Tyr-258) interacts with substrate.

This sequence belongs to the D-isomer specific 2-hydroxyacid dehydrogenase family. PdxB subfamily. In terms of assembly, homodimer.

It is found in the cytoplasm. It carries out the reaction 4-phospho-D-erythronate + NAD(+) = (R)-3-hydroxy-2-oxo-4-phosphooxybutanoate + NADH + H(+). It participates in cofactor biosynthesis; pyridoxine 5'-phosphate biosynthesis; pyridoxine 5'-phosphate from D-erythrose 4-phosphate: step 2/5. Functionally, catalyzes the oxidation of erythronate-4-phosphate to 3-hydroxy-2-oxo-4-phosphonooxybutanoate. This is Erythronate-4-phosphate dehydrogenase from Escherichia coli O6:K15:H31 (strain 536 / UPEC).